The following is a 341-amino-acid chain: Adenosine deaminase (341 aa).

Zn(2+) contacts are provided by histidine 15 and histidine 17. Substrate-binding residues include histidine 17, aspartate 19, and glycine 172. Histidine 199 contributes to the Zn(2+) binding site. Glutamate 202 serves as the catalytic Proton donor. Aspartate 279 serves as a coordination point for Zn(2+).

It belongs to the metallo-dependent hydrolases superfamily. Adenosine and AMP deaminases family. Adenosine deaminase subfamily. The cofactor is Zn(2+).

It carries out the reaction adenosine + H2O + H(+) = inosine + NH4(+). The catalysed reaction is 2'-deoxyadenosine + H2O + H(+) = 2'-deoxyinosine + NH4(+). Catalyzes the hydrolytic deamination of adenosine and 2-deoxyadenosine. In Streptococcus equi subsp. zooepidemicus (strain MGCS10565), this protein is Adenosine deaminase.